The primary structure comprises 247 residues: ATP synthase subunit a, chloroplastic (247 aa).

Transmembrane regions (helical) follow at residues 38-58, 95-115, 134-154, 199-219, and 220-240; these read QVLI…TLAV, VPFI…GALL, INTT…AGLS, LVVV…VMFL, and GLFT…AYIG.

Belongs to the ATPase A chain family. As to quaternary structure, F-type ATPases have 2 components, CF(1) - the catalytic core - and CF(0) - the membrane proton channel. CF(1) has five subunits: alpha(3), beta(3), gamma(1), delta(1), epsilon(1). CF(0) has four main subunits: a, b, b' and c.

The protein localises to the plastid. It localises to the chloroplast thylakoid membrane. Functionally, key component of the proton channel; it plays a direct role in the translocation of protons across the membrane. The sequence is that of ATP synthase subunit a, chloroplastic from Lemna minor (Common duckweed).